The following is a 347-amino-acid chain: P2Y purinoceptor 12 (347 aa).

The Extracellular portion of the chain corresponds to 1-33; that stretch reads MDVPGVNTTSANTTFSPGTSTLCVRDYKITQVL. 2 N-linked (GlcNAc...) asparagine glycosylation sites follow: Asn-7 and Asn-12. 2 cysteine pairs are disulfide-bonded: Cys-23-Cys-276 and Cys-103-Cys-181. Residues 34–56 form a helical membrane-spanning segment; it reads FPLLYTVLFFAGLITNSLAMRIF. The Cytoplasmic segment spans residues 57–67; sequence FQIRSKSNFII. Residues Ser-61 and Ser-63 each carry the phosphoserine modification. Residues 68–88 traverse the membrane as a helical segment; the sequence is FLKNTVISDLLMILTFPFKIL. Over 89–103 the chain is Extracellular; the sequence is SDAKLGAGPLRTLVC. Arg-99, Cys-103, and Tyr-111 together coordinate ADP. Residues 104–124 traverse the membrane as a helical segment; it reads QVTSVTFYFTMYISISFLGLI. Residues 125 to 148 lie on the Cytoplasmic side of the membrane; the sequence is TIDRYLKTTRPFKTSSPSNLLGAK. The helical transmembrane segment at 149 to 168 threads the bilayer; sequence ILSVVIWAFMFLISLPNMIL. ADP contacts are provided by residues 162–165, 181–185, His-193, and Asn-197; these read SLPN and CSFLK. At 169–191 the chain is on the extracellular side; the sequence is TNRRPKDKDVTKCSFLKSEFGLV. Residues 192-213 form a helical membrane-spanning segment; sequence WHEIVNYICQVIFWINFLIVIV. Over 214-239 the chain is Cytoplasmic; sequence CYSLITKELYRSYVRTRGSAKVPKKK. The chain crosses the membrane as a helical span at residues 240–265; sequence VNVKVFIIIAVFFICFVPFHFARIPY. ADP contacts are provided by residues 262–265, Gln-269, and Lys-286; that span reads RIPY. At 266-284 the chain is on the extracellular side; sequence TLSQTRAVFDCSAENTLFY. A helical membrane pass occupies residues 285 to 304; the sequence is VKESTLWLTSLNACLDPFIY. The Cytoplasmic segment spans residues 305-347; the sequence is FFLCKSFRNSLTSMLRCSNSTSTSGTNKKKGQEGGEPSEETPM. The tract at residues 321–347 is disordered; it reads CSNSTSTSGTNKKKGQEGGEPSEETPM.

It belongs to the G-protein coupled receptor 1 family.

The protein localises to the cell membrane. Functionally, receptor for ADP and ATP coupled to G-proteins that inhibit the adenylyl cyclase second messenger system. Required for normal platelet aggregation and blood coagulation. The protein is P2Y purinoceptor 12 (P2ry12) of Mus musculus (Mouse).